The chain runs to 62 residues: Protein P14 (62 aa).

In terms of biological role, needed for optimal phage development. This Pseudomonas savastanoi pv. phaseolicola (Pseudomonas syringae pv. phaseolicola) protein is Protein P14 (P14).